Consider the following 335-residue polypeptide: GTPase Obg (335 aa).

The Obg domain occupies 1 to 158; that stretch reads MFLDQITIEL…RQVELELKLI (158 aa). An OBG-type G domain is found at 159 to 334; the sequence is ADIGLVGFPN…LNSLFTNKLA (176 aa). GTP contacts are provided by residues 165 to 172, 190 to 194, 215 to 218, 285 to 288, and 315 to 317; these read GFPNAGKS, FTTLQ, DIPG, NKID, and SGL. Residues Ser-172 and Thr-192 each coordinate Mg(2+).

This sequence belongs to the TRAFAC class OBG-HflX-like GTPase superfamily. OBG GTPase family. Monomer. The cofactor is Mg(2+).

Its subcellular location is the cytoplasm. In terms of biological role, an essential GTPase (4.1 pmol GTP/min). Cannot substitute endogenous obg in E.coli, has a partially dominant-negative phenotype upon overexpression in liquid culture leading to decreased growth rate in a concentration-dependent fashion, with 50% of cells being elongated. Binds GTP, GDP and possibly (p)ppGpp with moderate affinity, with high nucleotide exchange rates and a fairly low GTP hydrolysis rate. It may play a role in control of the cell cycle, stress response, ribosome biogenesis and in those bacteria that undergo differentiation, in morphogenesis control. This Chlamydia abortus (strain DSM 27085 / S26/3) (Chlamydophila abortus) protein is GTPase Obg.